Consider the following 40-residue polypeptide: Photosystem II reaction center protein Y (40 aa).

The chain crosses the membrane as a helical span at residues 4 to 22 (LLVITLPILAAIGWVTLNI).

The protein belongs to the PsbY family. PSII is composed of 1 copy each of membrane proteins PsbA, PsbB, PsbC, PsbD, PsbE, PsbF, PsbH, PsbI, PsbJ, PsbK, PsbL, PsbM, PsbT, PsbX, PsbY, Psb30/Ycf12, peripheral proteins PsbO, CyanoQ (PsbQ), PsbU, PsbV and a large number of cofactors. It forms dimeric complexes.

Its subcellular location is the cellular thylakoid membrane. Loosely associated component of the core of photosystem II (PSII), it is not always seen in crystals. PSII is a light-driven water plastoquinone oxidoreductase, using light energy to abstract electrons from H(2)O, generating a proton gradient subsequently used for ATP formation. This chain is Photosystem II reaction center protein Y, found in Prochlorococcus marinus (strain SARG / CCMP1375 / SS120).